Here is a 322-residue protein sequence, read N- to C-terminus: tRNA dimethylallyltransferase (322 aa).

ATP is bound at residue 19-26 (GPTASGKT). 21-26 (TASGKT) contacts substrate. Interaction with substrate tRNA regions lie at residues 44 to 47 (DSAL), 168 to 172 (QRIQR), and 255 to 260 (RCVGYR).

It belongs to the IPP transferase family. As to quaternary structure, monomer. The cofactor is Mg(2+).

The catalysed reaction is adenosine(37) in tRNA + dimethylallyl diphosphate = N(6)-dimethylallyladenosine(37) in tRNA + diphosphate. Catalyzes the transfer of a dimethylallyl group onto the adenine at position 37 in tRNAs that read codons beginning with uridine, leading to the formation of N6-(dimethylallyl)adenosine (i(6)A). The chain is tRNA dimethylallyltransferase from Cupriavidus necator (strain ATCC 17699 / DSM 428 / KCTC 22496 / NCIMB 10442 / H16 / Stanier 337) (Ralstonia eutropha).